A 63-amino-acid polypeptide reads, in one-letter code: Large ribosomal subunit protein uL29 (63 aa).

The protein belongs to the universal ribosomal protein uL29 family.

The polypeptide is Large ribosomal subunit protein uL29 (Pectobacterium carotovorum subsp. carotovorum (strain PC1)).